A 358-amino-acid polypeptide reads, in one-letter code: Putative zinc metalloprotease BH06270 (358 aa).

His-7 contacts Zn(2+). The active site involves Glu-8. Position 11 (His-11) interacts with Zn(2+). 3 helical membrane-spanning segments follow: residues 89–111 (ATVFAGPLFNVLFTVVILTFFFF), 282–304 (FLSLLNFTAFLSIGVGLINLFPI), and 332–354 (IIFRLGLCFVLLFMFFALFNDYF). Residues 102–177 (TVVILTFFFF…IEFKMERSGQ (76 aa)) form the PDZ domain.

It belongs to the peptidase M50B family. Zn(2+) is required as a cofactor.

The protein localises to the cell inner membrane. This is Putative zinc metalloprotease BH06270 from Bartonella henselae (strain ATCC 49882 / DSM 28221 / CCUG 30454 / Houston 1) (Rochalimaea henselae).